A 391-amino-acid polypeptide reads, in one-letter code: F-box protein At2g34280 (391 aa).

The F-box domain maps to 1 to 43; sequence MDLLPYDVVEHILERLDVKSLLNCKSVSKQWRSTIRCRAFQER.

In Arabidopsis thaliana (Mouse-ear cress), this protein is F-box protein At2g34280.